The chain runs to 381 residues: Chaperone protein DnaJ (381 aa).

The J domain occupies Asp5–Gly70. A CR-type zinc finger spans residues Gly133–Lys211. Residues Cys146, Cys149, Cys163, Cys166, Cys185, Cys188, Cys199, and Cys202 each coordinate Zn(2+). 4 CXXCXGXG motif repeats span residues Cys146 to Gly153, Cys163 to Gly170, Cys185 to Gly192, and Cys199 to Gly206.

Belongs to the DnaJ family. In terms of assembly, homodimer. It depends on Zn(2+) as a cofactor.

Its subcellular location is the cytoplasm. Functionally, participates actively in the response to hyperosmotic and heat shock by preventing the aggregation of stress-denatured proteins and by disaggregating proteins, also in an autonomous, DnaK-independent fashion. Unfolded proteins bind initially to DnaJ; upon interaction with the DnaJ-bound protein, DnaK hydrolyzes its bound ATP, resulting in the formation of a stable complex. GrpE releases ADP from DnaK; ATP binding to DnaK triggers the release of the substrate protein, thus completing the reaction cycle. Several rounds of ATP-dependent interactions between DnaJ, DnaK and GrpE are required for fully efficient folding. Also involved, together with DnaK and GrpE, in the DNA replication of plasmids through activation of initiation proteins. This chain is Chaperone protein DnaJ, found in Haemophilus influenzae (strain 86-028NP).